A 302-amino-acid polypeptide reads, in one-letter code: Cuticle collagen dpy-13 (302 aa).

3 triple-helical region regions span residues 106 to 135 (GPQG…PGKA), 154 to 210 (GPPG…EGLP), and 219 to 278 (GEPG…PGTP). A disordered region spans residues 108-284 (QGAPGAPGKP…PGTPGERGIC (177 aa)). A compositionally biased stretch (pro residues) spans 144 to 159 (TPPPCKPCPQGPPGAP). Positions 188-197 (PKGPNGAPGK) are enriched in low complexity. Composition is skewed to pro residues over residues 247–257 (QPGPKGPPGPD) and 268–277 (QPGPVGPPGT).

Belongs to the cuticular collagen family. In terms of assembly, collagen polypeptide chains are complexed within the cuticle by disulfide bonds and other types of covalent cross-links.

Nematode cuticles are composed largely of collagen-like proteins. The cuticle functions both as an exoskeleton and as a barrier to protect the worm from its environment. Mutations in dpy-13 affects the body shape. This Caenorhabditis elegans protein is Cuticle collagen dpy-13 (dpy-13).